Here is a 1899-residue protein sequence, read N- to C-terminus: Protocadherin-15 (1899 aa).

An N-terminal signal peptide occupies residues 1 to 26; it reads MLQQFCLWKWLAVGIAVATILASSLA. Over 27–1376 the chain is Extracellular; sequence QNDEDCKLAR…AQAVGYTEGA (1350 aa). Residues C32 and C120 are joined by a disulfide bond. Cadherin domains are found at residues 38 to 147, 148 to 265, 278 to 395, 396 to 509, 510 to 616, 617 to 717, 719 to 819, 820 to 926, 927 to 1035, 1037 to 1144, and 1145 to 1259; these read GPPA…SPQF, QQQR…GPMF, RPLT…KPYF, TKST…SPTF, SNIS…PPRF, PQLM…GPVF, MFLP…SPVF, TNAS…SPVF, SKTL…IPRF, QDEY…APVF, and TKKM…PPTL. Residues 1377-1397 form a helical membrane-spanning segment; sequence LLALAVIIILCCMPAILIVMV. The Cytoplasmic segment spans residues 1398-1899; the sequence is SYRQRQAECA…KRFPSQSTAL (502 aa). 3 disordered regions span residues 1668 to 1687, 1700 to 1721, and 1734 to 1820; these read SPCL…VVEP, HDYP…SFRI, and TKGE…RREL. Pro residues-rich tracts occupy residues 1706-1717 and 1743-1773; these read LSPPPTRKPTPP and PDPP…PPTL. Low complexity predominate over residues 1774-1791; the sequence is PLASVPSSSSLPSTQHLS. Over residues 1804–1814 the composition is skewed to pro residues; the sequence is AVPPPAAVPEP.

In terms of tissue distribution, in the utricle, localizes to the distal region of the kinocilium and near the tips of the stereocilia.

The protein resides in the cell membrane. Calcium-dependent cell-adhesion protein. Required for inner ear neuroepithelial cell elaboration and cochlear function. Probably involved in the maintenance of normal retinal function. The chain is Protocadherin-15 (Pcdh15) from Gallus gallus (Chicken).